The chain runs to 192 residues: Flagellar transcriptional regulator FlhC (192 aa).

Zn(2+) contacts are provided by Cys-137, Cys-140, Cys-157, and Cys-160.

The protein belongs to the FlhC family. In terms of assembly, heterohexamer composed of two FlhC and four FlhD subunits. Each FlhC binds a FlhD dimer, forming a heterotrimer, and a hexamer assembles by dimerization of two heterotrimers. The cofactor is Zn(2+).

It localises to the cytoplasm. Functionally, functions in complex with FlhD as a master transcriptional regulator that regulates transcription of several flagellar and non-flagellar operons by binding to their promoter region. Activates expression of class 2 flagellar genes, including fliA, which is a flagellum-specific sigma factor that turns on the class 3 genes. Also regulates genes whose products function in a variety of physiological pathways. This is Flagellar transcriptional regulator FlhC from Escherichia coli O6:H1 (strain CFT073 / ATCC 700928 / UPEC).